The primary structure comprises 119 residues: Ribonuclease P protein component (119 aa).

It belongs to the RnpA family. In terms of assembly, consists of a catalytic RNA component (M1 or rnpB) and a protein subunit.

The enzyme catalyses Endonucleolytic cleavage of RNA, removing 5'-extranucleotides from tRNA precursor.. In terms of biological role, RNaseP catalyzes the removal of the 5'-leader sequence from pre-tRNA to produce the mature 5'-terminus. It can also cleave other RNA substrates such as 4.5S RNA. The protein component plays an auxiliary but essential role in vivo by binding to the 5'-leader sequence and broadening the substrate specificity of the ribozyme. This is Ribonuclease P protein component from Streptococcus pyogenes serotype M12 (strain MGAS2096).